The sequence spans 186 residues: Early nodulin-like protein 13 (186 aa).

Positions Met-1–Ser-23 are cleaved as a signal peptide. The region spanning Lys-24–Ser-128 is the Phytocyanin domain. Cys-82 and Cys-116 are joined by a disulfide. 2 N-linked (GlcNAc...) asparagine glycosylation sites follow: Asn-83 and Asn-90. The GPI-anchor amidated alanine moiety is linked to residue Ala-165. Residues Ser-166–Leu-186 constitute a propeptide, removed in mature form.

This sequence belongs to the early nodulin-like (ENODL) family. Mostly expressed in seedlings, siliques and flowers, and, to a lower extent, in roots, stems and seeds, but barely in leaves.

It is found in the cell membrane. Functionally, may act as a carbohydrate transporter. Required, together with ENODL11, ENODL12, ENODL13, ENODL14 and ENODL15, for male-female communication and pollen tube reception and burst at the synergid cell surface of the female gametophyte. The sequence is that of Early nodulin-like protein 13 from Arabidopsis thaliana (Mouse-ear cress).